The following is a 245-amino-acid chain: MNPKSNPDTIFSAPIDKIGDFTFDERVAEVFPDMIQRSVPGYSNIISAIGMLAERFVKPHSNIYDLGCSLGAATLSMRRHIKQEGCQIIAVDNSPAMVERCKLHVNAYRSDTPVDVVEADIRNIEIENASVVVLNFTLQFLSPEDRYALLEKIYAGLRPGGILILSEKFVFEDEVSNELLIDLHHDFKRANGYSELEISQKRSAIENVMRPDSKKDHKERFAEIGFSSYDVWFQCFNFGSMFAIK.

S-adenosyl-L-methionine-binding positions include Tyr-42, 67-69 (GCS), 92-93 (DN), 120-121 (DI), Asn-135, and Arg-202.

The protein belongs to the class I-like SAM-binding methyltransferase superfamily. Cx-SAM synthase family. As to quaternary structure, homodimer.

The enzyme catalyses prephenate + S-adenosyl-L-methionine = carboxy-S-adenosyl-L-methionine + 3-phenylpyruvate + H2O. In terms of biological role, catalyzes the conversion of S-adenosyl-L-methionine (SAM) to carboxy-S-adenosyl-L-methionine (Cx-SAM). The protein is Carboxy-S-adenosyl-L-methionine synthase of Vibrio campbellii (strain ATCC BAA-1116).